An 87-amino-acid polypeptide reads, in one-letter code: Putative sodium channel toxin Ts40 (87 aa).

Positions 1–19 (MTALFYLLFLTSVIIETHQ) are cleaved as a signal peptide. Cystine bridges form between Cys41-Cys63, Cys47-Cys68, and Cys51-Cys70.

Belongs to the long (4 C-C) scorpion toxin superfamily. Sodium channel inhibitor family. Expressed by the venom gland.

The protein resides in the secreted. Functionally, putative sodium channel toxin. The polypeptide is Putative sodium channel toxin Ts40 (Tityus serrulatus (Brazilian scorpion)).